The sequence spans 127 residues: Mediator of RNA polymerase II transcription subunit 31 (127 aa).

The protein belongs to the Mediator complex subunit 31 family. In terms of assembly, component of the Mediator complex, which is composed of at least 21 subunits that form three structurally distinct submodules. The Mediator head module contains MED6, MED8, MED11, SRB4/MED17, SRB5/MED18, ROX3/MED19, SRB2/MED20 and SRB6/MED22, the middle module contains MED1, MED4, NUT1/MED5, MED7, CSE2/MED9, NUT2/MED10, SRB7/MED21 and SOH1/MED31, and the tail module contains MED2, PGD1/MED3, RGR1/MED14, GAL11/MED15 and SIN4/MED16. The head and the middle modules interact directly with RNA polymerase II, whereas the elongated tail module interacts with gene-specific regulatory proteins.

Its subcellular location is the nucleus. Functionally, component of the Mediator complex, a coactivator involved in the regulated transcription of nearly all RNA polymerase II-dependent genes. Mediator functions as a bridge to convey information from gene-specific regulatory proteins to the basal RNA polymerase II transcription machinery. The Mediator complex, having a compact conformation in its free form, is recruited to promoters by direct interactions with regulatory proteins and serves for the assembly of a functional preinitiation complex with RNA polymerase II and the general transcription factors. The Mediator complex unfolds to an extended conformation and partially surrounds RNA polymerase II, specifically interacting with the unphosphorylated form of the C-terminal domain (CTD) of RNA polymerase II. The Mediator complex dissociates from the RNA polymerase II holoenzyme and stays at the promoter when transcriptional elongation begins. This is Mediator of RNA polymerase II transcription subunit 31 (SOH1) from Saccharomyces cerevisiae (strain ATCC 204508 / S288c) (Baker's yeast).